A 369-amino-acid chain; its full sequence is C2 calcium-dependent domain-containing protein 4A (369 aa).

Disordered regions lie at residues Pro-151–Pro-176 and Arg-197–Glu-240. Residues Ala-153–Pro-168 show a composition bias toward pro residues. A compositionally biased stretch (low complexity) spans Ser-220 to Pro-237. A C2 domain is found at Ala-253–Leu-369.

The protein belongs to the C2CD4 family. Specifically expressed in endothelial cells.

The protein resides in the nucleus. Functionally, may be involved in inflammatory process. May regulate cell architecture and adhesion. The polypeptide is C2 calcium-dependent domain-containing protein 4A (C2CD4A) (Homo sapiens (Human)).